A 338-amino-acid polypeptide reads, in one-letter code: Nucleoid-associated protein HI_0839 (338 aa).

This sequence belongs to the YejK family.

The protein localises to the cytoplasm. The protein resides in the nucleoid. The polypeptide is Nucleoid-associated protein HI_0839 (Haemophilus influenzae (strain ATCC 51907 / DSM 11121 / KW20 / Rd)).